The chain runs to 180 residues: MSVLRPLDKLPGLNTATILLVGTEDALLQQLADSMLKEDCASELKVHLAKSLPLPSSVNRPRIDLIVFVVNLHSKYSLQNTEESLRHVDASFFLGKVCFLATGAGRESHCSIHRHTVVKLAHTYQSPLLYCDLEVEGFRATMAQRLVRVLQICAGHVPGVSALNLLSLLRSSEGPSLEDL.

Component of the CENPA-NAC complex, at least composed of CENPA, CENPC, CENPH, CENPM, CENPN, CENPT and CENPU. The CENPA-NAC complex interacts with the CENPA-CAD complex, composed of CENPI, CENPK, CENPL, CENPO, CENPP, CENPQ, CENPR and CENPS. As to expression, isoform 3 is highly expressed in spleen, and intermediately in heart, prostate and ovary. Isoform 3 is highly expressed in resting CD19 B-cells and B-lineage chronic lymphocytic leukemia (B-CLL) cells and weakly expressed in activated B-cells. Isoform 1 is selectively expressed in activated CD19 cells and weakly in resting CD19 B-cells.

It is found in the nucleus. Its subcellular location is the cytoplasm. It localises to the chromosome. The protein resides in the centromere. The protein localises to the kinetochore. Functionally, component of the CENPA-NAC (nucleosome-associated) complex, a complex that plays a central role in assembly of kinetochore proteins, mitotic progression and chromosome segregation. The CENPA-NAC complex recruits the CENPA-CAD (nucleosome distal) complex and may be involved in incorporation of newly synthesized CENPA into centromeres. In Homo sapiens (Human), this protein is Centromere protein M (CENPM).